We begin with the raw amino-acid sequence, 132 residues long: Small ribosomal subunit protein uS8 (132 aa).

The protein belongs to the universal ribosomal protein uS8 family. As to quaternary structure, part of the 30S ribosomal subunit. Contacts proteins S5 and S12.

In terms of biological role, one of the primary rRNA binding proteins, it binds directly to 16S rRNA central domain where it helps coordinate assembly of the platform of the 30S subunit. This chain is Small ribosomal subunit protein uS8, found in Clostridium botulinum (strain ATCC 19397 / Type A).